A 595-amino-acid chain; its full sequence is MHRYRSHTCAALRKTDVGSNVRLSGWVHRVRDHGGILFIDLRDHYGITQIVADPDSPAFKVAETVRGEWVIRVDGEVKARADDAVNTNLPTGEVEIFATEIEVLSPAKELPLPVFGEPDYPEDIRLKYRFLDLRRETLHKNIMSRTKIIAAMRRRMTEIGFNEFSTPILTASSPEGARDFLVPSRIHPGKFYALPQAPQQYKQLLMVAGFDRYFQIAPCFRDEDPRADRLPGEFYQLDLEMSFVTQEEVWETMEPVMRGIFEEFAEGKPVTKVFRRIAYDDAIRTYGSDKPDLRNPIEMQAVTDHFAGSGFKVFANMIANDAKVEVWAIPAKTGGSRAFCDRMNSWAQSEGQPGLGYIFWRKEGDKLEGAGPIAKNIGEERTEAIRKQMGLEDGDACFFVAGLPSKFYKFAGDARTRAGEELNLVDRDRFELAWIIDFPFYEWDEDNKKIDFAHNPFSLPQGGMDALENMDPLEIKAYQYDLVCNGFEIASGSIRNQLPEVMVKAFEKVGLSQQDVEERFGGLYRAFQYGAPPHGGMAAGIDRVIMLLVGAKNLREISLFPMNQQALDLLMGAPSEVSPAQLRDLHVRLAPVQKS.

E175 serves as a coordination point for L-aspartate. An aspartate region spans residues 199 to 202 (QQYK). 2 residues coordinate L-aspartate: R221 and H454. 221–223 (RDE) is a binding site for ATP. E488 serves as a coordination point for ATP. R495 is a binding site for L-aspartate. 540–543 (GIDR) provides a ligand contact to ATP.

The protein belongs to the class-II aminoacyl-tRNA synthetase family. Type 1 subfamily. Homodimer.

The protein resides in the cytoplasm. The enzyme catalyses tRNA(Asx) + L-aspartate + ATP = L-aspartyl-tRNA(Asx) + AMP + diphosphate. Functionally, aspartyl-tRNA synthetase with relaxed tRNA specificity since it is able to aspartylate not only its cognate tRNA(Asp) but also tRNA(Asn). Reaction proceeds in two steps: L-aspartate is first activated by ATP to form Asp-AMP and then transferred to the acceptor end of tRNA(Asp/Asn). The protein is Aspartate--tRNA(Asp/Asn) ligase of Brucella abortus (strain S19).